The following is a 124-amino-acid chain: UPF0102 protein TM1040_0449 (124 aa).

Belongs to the UPF0102 family.

This is UPF0102 protein TM1040_0449 from Ruegeria sp. (strain TM1040) (Silicibacter sp.).